Here is a 394-residue protein sequence, read N- to C-terminus: Elongation factor Tu (394 aa).

One can recognise a tr-type G domain in the interval 10–205 (KPHMNVGTIG…TMDNYFDLPE (196 aa)). The interval 19–26 (GHVDHGKT) is G1. 19 to 26 (GHVDHGKT) provides a ligand contact to GTP. Residue threonine 26 participates in Mg(2+) binding. The segment at 61-65 (GITIN) is G2. The G3 stretch occupies residues 82–85 (DCPG). GTP contacts are provided by residues 82–86 (DCPGH) and 137–140 (NKLD). The G4 stretch occupies residues 137-140 (NKLD). The tract at residues 173–175 (SAF) is G5.

This sequence belongs to the TRAFAC class translation factor GTPase superfamily. Classic translation factor GTPase family. EF-Tu/EF-1A subfamily. Monomer.

Its subcellular location is the cytoplasm. It catalyses the reaction GTP + H2O = GDP + phosphate + H(+). In terms of biological role, GTP hydrolase that promotes the GTP-dependent binding of aminoacyl-tRNA to the A-site of ribosomes during protein biosynthesis. This chain is Elongation factor Tu, found in Borrelia duttonii (strain Ly).